The primary structure comprises 249 residues: NAD kinase (249 aa).

Asp49 (proton acceptor) is an active-site residue. NAD(+) contacts are provided by residues 49–50, Arg54, 115–116, Lys126, Arg143, Asp145, Ile153, 156–161, Ala180, and Gln211; these read DG, NE, and TGYAFS.

Belongs to the NAD kinase family. As to quaternary structure, homotetramer. Requires a divalent metal cation as cofactor.

Its subcellular location is the cytoplasm. The enzyme catalyses NAD(+) + ATP = ADP + NADP(+) + H(+). Involved in the regulation of the intracellular balance between NAD(H) and NADP(H), and is a key enzyme in the biosynthesis of NADP. Catalyzes specifically the phosphorylation on 2'-hydroxyl of the adenosine moiety of NAD to yield NADP. In Archaeoglobus fulgidus (strain ATCC 49558 / DSM 4304 / JCM 9628 / NBRC 100126 / VC-16), this protein is NAD kinase.